Consider the following 442-residue polypeptide: C4-dicarboxylate transport protein 2 (442 aa).

Transmembrane regions (helical) follow at residues 20–39 (QLYV…GHYY), 52–74 (AFIK…TGIA), 89–111 (AMLY…ANVV), 141–158 (VTGF…GAFA), 162–179 (ILQV…LALV), 200–221 (LVSV…FTIG), 231–253 (LAML…LGAV), 342–364 (ILLL…AGFI), and 368–387 (ATLS…ILGV).

The protein belongs to the dicarboxylate/amino acid:cation symporter (DAACS) (TC 2.A.23) family.

The protein localises to the cell inner membrane. In terms of biological role, responsible for the transport of dicarboxylates such as succinate, fumarate, and malate from the periplasm across the membrane. This transport system plays an important role in the energy supply of rhizobium-legume symbionts. The protein is C4-dicarboxylate transport protein 2 (dctA2) of Mesorhizobium japonicum (strain LMG 29417 / CECT 9101 / MAFF 303099) (Mesorhizobium loti (strain MAFF 303099)).